A 230-amino-acid chain; its full sequence is Cytochrome c oxidase subunit 2 (230 aa).

At 1-14 (MAYPLQLGFQDATS) the chain is on the mitochondrial intermembrane side. The helical transmembrane segment at 15 to 45 (PIMEELLHFHDHTLMIVFLISSLVLYIISTM) threads the bilayer. Topologically, residues 46-59 (LTTKLTHTNTMDAQ) are mitochondrial matrix. Residues 60–87 (EVETIWTILPAIILILIALPSLRILYMM) form a helical membrane-spanning segment. Residues 88 to 230 (DEINNPNLTI…NWTSSMMSTS (143 aa)) are Mitochondrial intermembrane-facing. Cu cation contacts are provided by H161, C196, E198, C200, H204, and M207. E198 contacts Mg(2+). Y218 is subject to Phosphotyrosine.

This sequence belongs to the cytochrome c oxidase subunit 2 family. As to quaternary structure, component of the cytochrome c oxidase (complex IV, CIV), a multisubunit enzyme composed of 14 subunits. The complex is composed of a catalytic core of 3 subunits MT-CO1, MT-CO2 and MT-CO3, encoded in the mitochondrial DNA, and 11 supernumerary subunits COX4I, COX5A, COX5B, COX6A, COX6B, COX6C, COX7A, COX7B, COX7C, COX8 and NDUFA4, which are encoded in the nuclear genome. The complex exists as a monomer or a dimer and forms supercomplexes (SCs) in the inner mitochondrial membrane with NADH-ubiquinone oxidoreductase (complex I, CI) and ubiquinol-cytochrome c oxidoreductase (cytochrome b-c1 complex, complex III, CIII), resulting in different assemblies (supercomplex SCI(1)III(2)IV(1) and megacomplex MCI(2)III(2)IV(2)). Found in a complex with TMEM177, COA6, COX18, COX20, SCO1 and SCO2. Interacts with TMEM177 in a COX20-dependent manner. Interacts with COX20. Interacts with COX16. Requires Cu cation as cofactor.

It localises to the mitochondrion inner membrane. It catalyses the reaction 4 Fe(II)-[cytochrome c] + O2 + 8 H(+)(in) = 4 Fe(III)-[cytochrome c] + 2 H2O + 4 H(+)(out). Its function is as follows. Component of the cytochrome c oxidase, the last enzyme in the mitochondrial electron transport chain which drives oxidative phosphorylation. The respiratory chain contains 3 multisubunit complexes succinate dehydrogenase (complex II, CII), ubiquinol-cytochrome c oxidoreductase (cytochrome b-c1 complex, complex III, CIII) and cytochrome c oxidase (complex IV, CIV), that cooperate to transfer electrons derived from NADH and succinate to molecular oxygen, creating an electrochemical gradient over the inner membrane that drives transmembrane transport and the ATP synthase. Cytochrome c oxidase is the component of the respiratory chain that catalyzes the reduction of oxygen to water. Electrons originating from reduced cytochrome c in the intermembrane space (IMS) are transferred via the dinuclear copper A center (CU(A)) of subunit 2 and heme A of subunit 1 to the active site in subunit 1, a binuclear center (BNC) formed by heme A3 and copper B (CU(B)). The BNC reduces molecular oxygen to 2 water molecules using 4 electrons from cytochrome c in the IMS and 4 protons from the mitochondrial matrix. The protein is Cytochrome c oxidase subunit 2 (MT-CO2) of Ornithorhynchus anatinus (Duckbill platypus).